The following is a 268-amino-acid chain: UPF0328 protein ECU09_2030 (268 aa).

It belongs to the UPF0328 family.

This is UPF0328 protein ECU09_2030 from Encephalitozoon cuniculi (strain GB-M1) (Microsporidian parasite).